The chain runs to 415 residues: Pectin acetylesterase 12 (415 aa).

The N-terminal stretch at 1–20 (MVKLLLVGFVVAGIILGTQA) is a signal peptide. N-linked (GlcNAc...) asparagine glycosylation is present at Asn-27. Active-site charge relay system residues include Ser-197, Asp-293, and His-360.

The protein belongs to the pectinacetylesterase family.

It localises to the secreted. Its subcellular location is the cell wall. Its function is as follows. Hydrolyzes acetyl esters in homogalacturonan regions of pectin. In type I primary cell wall, galacturonic acid residues of pectin can be acetylated at the O-2 and O-3 positions. Decreasing the degree of acetylation of pectin gels in vitro alters their physical properties. This is Pectin acetylesterase 12 from Arabidopsis thaliana (Mouse-ear cress).